The chain runs to 102 residues: FGSLLGLCLITQILTGLFLAMHYTADTSSAFSSVAHICRDVNYGWLMRNIHANGASFFFICIFLHIGRGMYYGSYMFKETWNIGVILLFLVMATAFVGYVLP.

A run of 3 helical transmembrane segments spans residues Phe1–Met21, Trp45–Ile66, and Trp81–Leu101. His51 and His65 together coordinate heme b.

Belongs to the cytochrome b family. In terms of assembly, the cytochrome bc1 complex contains 3 respiratory subunits (MT-CYB, CYC1 and UQCRFS1), 2 core proteins (UQCRC1 and UQCRC2) and probably 6 low-molecular weight proteins. Heme b is required as a cofactor.

The protein resides in the mitochondrion inner membrane. Component of the ubiquinol-cytochrome c reductase complex (complex III or cytochrome b-c1 complex) that is part of the mitochondrial respiratory chain. The b-c1 complex mediates electron transfer from ubiquinol to cytochrome c. Contributes to the generation of a proton gradient across the mitochondrial membrane that is then used for ATP synthesis. The sequence is that of Cytochrome b (mt-cyb) from Ambystoma tigrinum (Eastern tiger salamander).